A 396-amino-acid chain; its full sequence is MAIRIKLKPGREKSLERRHPWVFSNAIHNIKGKPEAGETVDVVAHDGHWLGRGAWSPESQIQVRIWTFDREEEIDREFFARRLQRAQIGRNDLIREQGLTGYRLVAAESDGLPGITIDRYANVLVCQLLSTGADLWRDTLVELLAEQYPDCAIYERSDVDSRKKEGLLPVTGLLHGTLPEMPVIIEENGIKIAVDVIKGHKTGFYLDQRDNRAIAARFVKDKSVLNCFCYTGTFGLYAAKAGAASIENVDVSSLALATARLNMQVNGLSDDNVHYNEADVFKLLRLYRDEGKTFDVIVLDPPKFADNKAQLNGACRGYKDINMIALQLLNPGGVLLTFSCSGLMPADLFQKIVADAALDAKREIQFIERLSQASDHPIGSAFPEGFYLKGLVARAW.

The region spanning 2–79 is the PUA domain; the sequence is AIRIKLKPGR…REEEIDREFF (78 aa).

It belongs to the methyltransferase superfamily. RlmI family.

The protein localises to the cytoplasm. It carries out the reaction cytidine(1962) in 23S rRNA + S-adenosyl-L-methionine = 5-methylcytidine(1962) in 23S rRNA + S-adenosyl-L-homocysteine + H(+). Specifically methylates the cytosine at position 1962 (m5C1962) of 23S rRNA. This Shewanella baltica (strain OS155 / ATCC BAA-1091) protein is Ribosomal RNA large subunit methyltransferase I.